We begin with the raw amino-acid sequence, 400 residues long: Acetate kinase (400 aa).

Asn-10 provides a ligand contact to Mg(2+). Residue Lys-17 participates in ATP binding. Arg-91 lines the substrate pocket. The active-site Proton donor/acceptor is the Asp-150. ATP contacts are provided by residues 210 to 214 (HLGNG), 285 to 287 (DCR), and 333 to 337 (GIGEN). Position 387 (Glu-387) interacts with Mg(2+).

This sequence belongs to the acetokinase family. In terms of assembly, homodimer. It depends on Mg(2+) as a cofactor. Mn(2+) is required as a cofactor.

The protein resides in the cytoplasm. It catalyses the reaction acetate + ATP = acetyl phosphate + ADP. Its pathway is metabolic intermediate biosynthesis; acetyl-CoA biosynthesis; acetyl-CoA from acetate: step 1/2. Catalyzes the formation of acetyl phosphate from acetate and ATP. Can also catalyze the reverse reaction. This chain is Acetate kinase, found in Photorhabdus laumondii subsp. laumondii (strain DSM 15139 / CIP 105565 / TT01) (Photorhabdus luminescens subsp. laumondii).